The chain runs to 409 residues: Putative competence-damage inducible protein (409 aa).

The protein belongs to the CinA family.

The protein is Putative competence-damage inducible protein of Clostridium botulinum (strain ATCC 19397 / Type A).